We begin with the raw amino-acid sequence, 454 residues long: Histidine--tRNA ligase (454 aa).

The protein belongs to the class-II aminoacyl-tRNA synthetase family. Homodimer.

The protein localises to the cytoplasm. The enzyme catalyses tRNA(His) + L-histidine + ATP = L-histidyl-tRNA(His) + AMP + diphosphate + H(+). The chain is Histidine--tRNA ligase from Bacteroides fragilis (strain YCH46).